An 80-amino-acid chain; its full sequence is UPF0180 protein BPUM_1317 (80 aa).

This sequence belongs to the UPF0180 family.

The protein is UPF0180 protein BPUM_1317 of Bacillus pumilus (strain SAFR-032).